The primary structure comprises 174 residues: Co-chaperone protein HscB homolog (174 aa).

In terms of domain architecture, J spans 2–74; sequence NYFELFSFTP…ILRAEHMLSL (73 aa).

It belongs to the HscB family. As to quaternary structure, interacts with HscA and stimulates its ATPase activity.

Co-chaperone involved in the maturation of iron-sulfur cluster-containing proteins. Seems to help targeting proteins to be folded toward HscA. The sequence is that of Co-chaperone protein HscB homolog from Shewanella woodyi (strain ATCC 51908 / MS32).